A 118-amino-acid chain; its full sequence is SPbeta prophage-derived uncharacterized protein YolB (118 aa).

The polypeptide is SPbeta prophage-derived uncharacterized protein YolB (yolB) (Bacillus subtilis (strain 168)).